The primary structure comprises 224 residues: Response regulator protein GraR (224 aa).

Positions 2 to 115 constitute a Response regulatory domain; that stretch reads QILLVEDDNT…VLIAKLQAIY (114 aa). Aspartate 51 carries the post-translational modification 4-aspartylphosphate. The ompR/PhoB-type DNA-binding region spans 126-224; the sequence is KRTLTWQDAV…KVGKGYMAHE (99 aa). Phosphothreonine occurs at positions 128, 130, and 149.

In terms of assembly, interacts with GraX. In terms of processing, phosphorylated by GraS. Phosphorylated by Stk1; phosphorylation increases the DNA-binding activity of GraR.

It localises to the cytoplasm. Functionally, member of the two-component regulatory system GraR/GraS involved in resistance against cationic antimicrobial peptides (CAMPs). Upon phosphorylation by GraS, functions as a transcription regulator by direct binding to promoter regions of target genes such as adhesins, exoproteins, transporters, toxins, and proteins involved in cell wall synthesis. Down-regulates the expression of many genes involved in RNA and amino acid synthesis or glycolysis. The polypeptide is Response regulator protein GraR (graR) (Staphylococcus aureus (strain Mu3 / ATCC 700698)).